A 185-amino-acid chain; its full sequence is Elongation factor P (185 aa).

The protein belongs to the elongation factor P family.

Its subcellular location is the cytoplasm. It functions in the pathway protein biosynthesis; polypeptide chain elongation. Its function is as follows. Involved in peptide bond synthesis. Stimulates efficient translation and peptide-bond synthesis on native or reconstituted 70S ribosomes in vitro. Probably functions indirectly by altering the affinity of the ribosome for aminoacyl-tRNA, thus increasing their reactivity as acceptors for peptidyl transferase. This is Elongation factor P from Microcystis aeruginosa (strain NIES-843 / IAM M-2473).